Reading from the N-terminus, the 375-residue chain is 23S rRNA (uracil(747)-C(5))-methyltransferase RlmC (375 aa).

[4Fe-4S] cluster-binding residues include cysteine 3, cysteine 11, cysteine 14, and cysteine 87. The S-adenosyl-L-methionine site is built by glutamine 212, phenylalanine 241, glutamate 262, and asparagine 307. The active-site Nucleophile is the cysteine 334.

Belongs to the class I-like SAM-binding methyltransferase superfamily. RNA M5U methyltransferase family. RlmC subfamily.

It carries out the reaction uridine(747) in 23S rRNA + S-adenosyl-L-methionine = 5-methyluridine(747) in 23S rRNA + S-adenosyl-L-homocysteine + H(+). In terms of biological role, catalyzes the formation of 5-methyl-uridine at position 747 (m5U747) in 23S rRNA. This Escherichia coli O127:H6 (strain E2348/69 / EPEC) protein is 23S rRNA (uracil(747)-C(5))-methyltransferase RlmC.